The following is a 509-amino-acid chain: Bifunctional purine biosynthesis protein PurH (509 aa).

One can recognise an MGS-like domain in the interval 1-144; the sequence is MKRALISVSD…KNYAAVTVVV (144 aa).

This sequence belongs to the PurH family.

The catalysed reaction is (6R)-10-formyltetrahydrofolate + 5-amino-1-(5-phospho-beta-D-ribosyl)imidazole-4-carboxamide = 5-formamido-1-(5-phospho-D-ribosyl)imidazole-4-carboxamide + (6S)-5,6,7,8-tetrahydrofolate. The enzyme catalyses IMP + H2O = 5-formamido-1-(5-phospho-D-ribosyl)imidazole-4-carboxamide. Its pathway is purine metabolism; IMP biosynthesis via de novo pathway; 5-formamido-1-(5-phospho-D-ribosyl)imidazole-4-carboxamide from 5-amino-1-(5-phospho-D-ribosyl)imidazole-4-carboxamide (10-formyl THF route): step 1/1. It functions in the pathway purine metabolism; IMP biosynthesis via de novo pathway; IMP from 5-formamido-1-(5-phospho-D-ribosyl)imidazole-4-carboxamide: step 1/1. In Listeria innocua serovar 6a (strain ATCC BAA-680 / CLIP 11262), this protein is Bifunctional purine biosynthesis protein PurH.